Here is a 293-residue protein sequence, read N- to C-terminus: Bisanhydrobacterioruberin hydratase (293 aa).

7 consecutive transmembrane segments (helical) span residues 36-56 (IAVV…EGLL), 66-86 (FVLF…FPLV), 89-109 (RAGL…LVGV), 134-154 (FGLP…VLLL), 171-191 (ATVM…GFWI), 199-219 (GVPW…VLLF), and 254-274 (LFYT…GLLW).

It belongs to the BABR hydratase family.

It localises to the membrane. The catalysed reaction is bacterioruberin = bisanhydrobacterioruberin + 2 H2O. Its pathway is carotenoid biosynthesis. Its function is as follows. Involved in the biosynthesis of the acyclic C50 carotenoid bacterioruberin (BR). Catalyzes the reaction that introduces hydroxyl groups to C3'' and C3''' of bisanhydrobacterioruberin (BABR) to generate BR. In Haloarcula japonica (strain ATCC 49778 / DSM 6131 / JCM 7785 / NBRC 101032 / NCIMB 13157 / TR-1), this protein is Bisanhydrobacterioruberin hydratase.